The primary structure comprises 695 residues: Adhesion G protein-coupled receptor F4 (695 aa).

The first 21 residues, 1 to 21 (MKMKSQATMICCLVFFLSTEC), serve as a signal peptide directing secretion. The Extracellular portion of the chain corresponds to 22-406 (SHYRSKIHLK…TDKVLDYITC (385 aa)). N61, N169, N177, N209, N229, N250, N257, N263, N264, N286, N309, and N340 each carry an N-linked (GlcNAc...) asparagine glycan. The 149-residue stretch at 249-397 (HNTSEKSLNF…SILMSSKSMT (149 aa)) folds into the GAIN-B domain. 2 cysteine pairs are disulfide-bonded: C349-C376 and C364-C378. Positions 349–397 (CVGWHSKKRRWDEKACQMMLDIRNEVKCRCNYTSVVMSFSILMSSKSMT) are GPS. N-linked (GlcNAc...) asparagine glycosylation is present at N379. A helical transmembrane segment spans residues 407–427 (IGLSVSILSLVLCLIIEATVW). Topologically, residues 428 to 440 (SRVVVTEISYMRH) are cytoplasmic. The helical transmembrane segment at 441–461 (VCIVNIAVSLLTANVWFIIGS) threads the bilayer. Over 462 to 485 (HFNIKAQDYNMCVAVTFFSHFFYL) the chain is Extracellular. A helical membrane pass occupies residues 486 to 506 (SLFFWMLFKALLIIYGILVIF). The Cytoplasmic segment spans residues 507-515 (RRMMKSRMM). The chain crosses the membrane as a helical span at residues 516–536 (VIGFAIGYGCPLIIAVTTVAI). Residues 537-561 (TEPEKGYMRPEACWLNWDNTKALLA) lie on the Extracellular side of the membrane. Residues 562-582 (FAIPAFVIVAVNLIVVLVVAV) form a helical membrane-spanning segment. Residues 583–606 (NTQRPSIGSSKSQDVVIIMRISKN) lie on the Cytoplasmic side of the membrane. A helical membrane pass occupies residues 607–627 (VAILTPLLGLTWGFGIATLIE). The Extracellular portion of the chain corresponds to 628-634 (GTSLTFH). A helical transmembrane segment spans residues 635-655 (IIFALLNAFQGFFILLFGTIM). Residues 656–695 (DHKIRDALRMRMSSLKGKSRAAENASLGPTNGSKLMNRQG) are Cytoplasmic-facing. Residues 674 to 695 (SRAAENASLGPTNGSKLMNRQG) form a disordered region. Polar residues predominate over residues 682 to 695 (LGPTNGSKLMNRQG).

Belongs to the G-protein coupled receptor 2 family. Adhesion G-protein coupled receptor (ADGR) subfamily.

It localises to the membrane. Orphan receptor. The protein is Adhesion G protein-coupled receptor F4 (ADGRF4) of Homo sapiens (Human).